The primary structure comprises 256 residues: Peptidyl-prolyl cis-trans isomerase FKBP19, chloroplastic (256 aa).

The transit peptide at 1 to 29 directs the protein to the chloroplast; the sequence is MASISSFGCFPQSTALAGTSSTTRCRTTV. A thylakoid-targeting transit peptide spans 30-88; it reads AARLADQSDDFAPLRSSGGNCGCVNNSGEFDRRKLLVSSVGLLIGALSYDSKDGDFASA. Positions 135–254 constitute a PPIase FKBP-type domain; the sequence is GDKVVVDWDG…LFDVELLKIV (120 aa). Serine 164 carries the post-translational modification Phosphoserine.

The protein belongs to the FKBP-type PPIase family.

The protein localises to the plastid. It localises to the chloroplast thylakoid lumen. It catalyses the reaction [protein]-peptidylproline (omega=180) = [protein]-peptidylproline (omega=0). PPIases accelerate the folding of proteins. It catalyzes the cis-trans isomerization of proline imidic peptide bonds in oligopeptides. In Arabidopsis thaliana (Mouse-ear cress), this protein is Peptidyl-prolyl cis-trans isomerase FKBP19, chloroplastic (FKBP19).